We begin with the raw amino-acid sequence, 783 residues long: Cation/H(+) antiporter 10 (783 aa).

12 helical membrane-spanning segments follow: residues 31–51, 61–81, 100–120, 135–155, 175–195, 206–226, 244–264, 276–295, 300–322, 356–376, 389–409, and 418–438; these read VVFG…FFCI, IGIS…PQLF, IAAL…LMTV, VVIG…QNFF, AIVI…LLEL, ALSA…VASI, AVII…QWVI, MYIH…FVFF, ILGP…ALEA, IFFN…ACLA, LAVS…YEAV, and ATYS…PTVL.

It belongs to the monovalent cation:proton antiporter 2 (CPA2) transporter (TC 2.A.37) family. CHX (TC 2.A.37.4) subfamily. As to expression, specifically expressed in pollen.

Its subcellular location is the membrane. May operate as a cation/H(+) antiporter. The protein is Cation/H(+) antiporter 10 (CHX10) of Arabidopsis thaliana (Mouse-ear cress).